Consider the following 425-residue polypeptide: Elongation factor 1-alpha (425 aa).

In terms of domain architecture, tr-type G spans 5-221; sequence KPHINLAVIG…DELEVPDKPT (217 aa). The G1 stretch occupies residues 14 to 21; the sequence is GHIDHGKS. 14–21 is a binding site for GTP; it reads GHIDHGKS. Position 21 (Ser-21) interacts with Mg(2+). The interval 70–74 is G2; sequence GITID. Positions 91 to 94 are G3; it reads DCPG. Residues 91–95 and 146–149 contribute to the GTP site; these read DCPGH and NKMD. Positions 146 to 149 are G4; that stretch reads NKMD. The interval 185 to 187 is G5; the sequence is SAF.

It belongs to the TRAFAC class translation factor GTPase superfamily. Classic translation factor GTPase family. EF-Tu/EF-1A subfamily.

The protein resides in the cytoplasm. The enzyme catalyses GTP + H2O = GDP + phosphate + H(+). GTP hydrolase that promotes the GTP-dependent binding of aminoacyl-tRNA to the A-site of ribosomes during protein biosynthesis. This chain is Elongation factor 1-alpha, found in Methanospirillum hungatei JF-1 (strain ATCC 27890 / DSM 864 / NBRC 100397 / JF-1).